The chain runs to 90 residues: Small ribosomal subunit protein bS16 (90 aa).

Belongs to the bacterial ribosomal protein bS16 family.

This Clostridioides difficile (strain 630) (Peptoclostridium difficile) protein is Small ribosomal subunit protein bS16.